Here is a 343-residue protein sequence, read N- to C-terminus: ELAV-like protein 3 (343 aa).

3 consecutive RRM domains span residues 35–113, 121–202, and 260–338; these read TNLI…YARP, ANLY…FANN, and WCIF…FKTS.

Belongs to the RRM elav family.

In terms of biological role, RNA-binding protein that binds to AU-rich sequences (AREs) of target mRNAs. May also bind poly-A tracts via RRM 3. May be involved in neuronal differentiation and maintenance. The sequence is that of ELAV-like protein 3 from Xenopus tropicalis (Western clawed frog).